A 364-amino-acid chain; its full sequence is MANKTILFNKHLESNAKMVDFHGWDMPLNYGSQIEEHNAVRQDAGMFDVSHMTVVDVIGNDACAFLRKLLANDVAKLKVPGKALYGGMLDENAGVIDDLITYYLTDTNYRVVVNSATREKDLAWIAKQSQGFDVTVTERPELAMIAVQGPNAKAKAAAVLSAEQNAAIEGMKPFFGKQAGSLFIATTGYTGEAGYEIIVPENEAEAMWQALLDQGVKPCGLGARDTLRLEAGMNLYGLDMDETINPLAANMGWTIAWEPSDRDFIGRKALETLRDAGTDKLVGLVMEEKGVLRHDMPVFFTDSAGVEHQGVITSGTFSPTLGYSIAMARVPNSIGDTAEVEMRKKRVAVRVVAPNFVRNGKQAF.

It belongs to the GcvT family. The glycine cleavage system is composed of four proteins: P, T, L and H.

It catalyses the reaction N(6)-[(R)-S(8)-aminomethyldihydrolipoyl]-L-lysyl-[protein] + (6S)-5,6,7,8-tetrahydrofolate = N(6)-[(R)-dihydrolipoyl]-L-lysyl-[protein] + (6R)-5,10-methylene-5,6,7,8-tetrahydrofolate + NH4(+). The glycine cleavage system catalyzes the degradation of glycine. In Shewanella baltica (strain OS155 / ATCC BAA-1091), this protein is Aminomethyltransferase.